A 177-amino-acid chain; its full sequence is Inner membrane protein p22 (177 aa).

The Intravirion segment spans residues 1–7 (MFNIKMT). A helical transmembrane segment spans residues 8 to 28 (ISTLLIALIILVIIILVVFLY). Residues 29 to 177 (YKKQQPPKKV…IALPRNHKHA (149 aa)) lie on the Virion surface side of the membrane.

It belongs to the asfivirus inner membrane protein p22 family.

The protein resides in the virion membrane. The protein localises to the host cell membrane. In Ornithodoros (relapsing fever ticks), this protein is Inner membrane protein p22.